We begin with the raw amino-acid sequence, 443 residues long: Signal recognition particle 54 kDa protein (443 aa).

GTP-binding positions include 107–114, 189–193, and 247–250; these read GIQGSGKT, DTAGR, and TKLD.

Belongs to the GTP-binding SRP family. SRP54 subfamily. Part of the signal recognition particle protein translocation system, which is composed of SRP and FtsY. Archaeal SRP consists of a 7S RNA molecule of 300 nucleotides and two protein subunits: SRP54 and SRP19.

It is found in the cytoplasm. The enzyme catalyses GTP + H2O = GDP + phosphate + H(+). Involved in targeting and insertion of nascent membrane proteins into the cytoplasmic membrane. Binds to the hydrophobic signal sequence of the ribosome-nascent chain (RNC) as it emerges from the ribosomes. The SRP-RNC complex is then targeted to the cytoplasmic membrane where it interacts with the SRP receptor FtsY. This is Signal recognition particle 54 kDa protein from Pyrococcus furiosus (strain ATCC 43587 / DSM 3638 / JCM 8422 / Vc1).